We begin with the raw amino-acid sequence, 511 residues long: Histidine ammonia-lyase (511 aa).

Residues 142 to 144 (ASG) constitute a cross-link (5-imidazolinone (Ala-Gly)). Ser-143 bears the 2,3-didehydroalanine (Ser) mark.

This sequence belongs to the PAL/histidase family. Contains an active site 4-methylidene-imidazol-5-one (MIO), which is formed autocatalytically by cyclization and dehydration of residues Ala-Ser-Gly.

It localises to the cytoplasm. The enzyme catalyses L-histidine = trans-urocanate + NH4(+). The protein operates within amino-acid degradation; L-histidine degradation into L-glutamate; N-formimidoyl-L-glutamate from L-histidine: step 1/3. The protein is Histidine ammonia-lyase of Rhizobium rhizogenes (strain K84 / ATCC BAA-868) (Agrobacterium radiobacter).